Reading from the N-terminus, the 571-residue chain is Medium/long-chain-fatty-acid--CoA ligase FadD8 (571 aa).

Positions 1-22 are disordered; that stretch reads MSTAGDDAVGVPPACGGRSDAV.

Belongs to the ATP-dependent AMP-binding enzyme family.

It carries out the reaction a medium-chain fatty acid + ATP + CoA = a medium-chain fatty acyl-CoA + AMP + diphosphate. It catalyses the reaction a long-chain fatty acid + ATP + CoA = a long-chain fatty acyl-CoA + AMP + diphosphate. The catalysed reaction is hexanoate + ATP + CoA = hexanoyl-CoA + AMP + diphosphate. The enzyme catalyses dodecanoate + ATP + CoA = dodecanoyl-CoA + AMP + diphosphate. It carries out the reaction hexadecanoate + ATP + CoA = hexadecanoyl-CoA + AMP + diphosphate. Its pathway is lipid metabolism; fatty acid metabolism. Catalyzes the activation of medium/long-chain fatty acids as acyl-coenzyme A (acyl-CoA). The chain is Medium/long-chain-fatty-acid--CoA ligase FadD8 from Mycobacterium tuberculosis (strain ATCC 25618 / H37Rv).